The following is a 110-amino-acid chain: Large ribosomal subunit protein uL22 (110 aa).

It belongs to the universal ribosomal protein uL22 family. In terms of assembly, part of the 50S ribosomal subunit.

This protein binds specifically to 23S rRNA; its binding is stimulated by other ribosomal proteins, e.g. L4, L17, and L20. It is important during the early stages of 50S assembly. It makes multiple contacts with different domains of the 23S rRNA in the assembled 50S subunit and ribosome. Functionally, the globular domain of the protein is located near the polypeptide exit tunnel on the outside of the subunit, while an extended beta-hairpin is found that lines the wall of the exit tunnel in the center of the 70S ribosome. In Nitrosomonas eutropha (strain DSM 101675 / C91 / Nm57), this protein is Large ribosomal subunit protein uL22.